The primary structure comprises 196 residues: Secreted effector protein SseB (196 aa).

This sequence belongs to the EspA/SseB family. May form a complex with SseC and SseD. Binds to the chaperone SseA.

Its subcellular location is the secreted. It is found in the cell surface. In terms of biological role, effector proteins function to alter host cell physiology and promote bacterial survival in host tissues. May act as a translocator that mediates translocation of SPI-2 T3SS effector proteins from intraphagosomal bacterial cells into the host cells. SseB is required for correct localization of SseC and SseD on the bacterial cell surface. The chain is Secreted effector protein SseB (sseB) from Salmonella typhimurium (strain LT2 / SGSC1412 / ATCC 700720).